The primary structure comprises 169 residues: Large ribosomal subunit protein uL10 (169 aa).

The protein belongs to the universal ribosomal protein uL10 family. As to quaternary structure, part of the ribosomal stalk of the 50S ribosomal subunit. The N-terminus interacts with L11 and the large rRNA to form the base of the stalk. The C-terminus forms an elongated spine to which L12 dimers bind in a sequential fashion forming a multimeric L10(L12)X complex.

Its function is as follows. Forms part of the ribosomal stalk, playing a central role in the interaction of the ribosome with GTP-bound translation factors. This is Large ribosomal subunit protein uL10 from Orientia tsutsugamushi (strain Ikeda) (Rickettsia tsutsugamushi).